The sequence spans 529 residues: Zinc finger CCCH domain-containing protein 65 (529 aa).

The segment covering 1–10 (MADADARAPP) has biased composition (basic and acidic residues). 2 disordered regions span residues 1–36 (MADADARAPPKSDPGATPIGSISPSSAAPAAGEDEV) and 134–179 (PARK…GSYV). The segment covering 14-31 (PGATPIGSISPSSAAPAA) has biased composition (low complexity). C3H1-type zinc fingers lie at residues 108 to 136 (RPGEPDCTYYVKFGSCRFGMKCKFNHPAR), 237 to 265 (GSSQEECKYYSTPGGCKFGKACKYLHRDG), and 285 to 313 (RPGEKECPYYMRTGSCKYATNCKFHHPDP). The tract at residues 313 to 347 (PSNVASKDPQLEHENGDAPQQDVQGSSSQPNASIW) is disordered. A compositionally biased stretch (polar residues) spans 333–344 (QDVQGSSSQPNA). 2 C3H1-type zinc fingers span residues 433-461 (RPGQPECQHFVKSGFCKFRMKCKYHHPRS) and 477-505 (KPDQPVCTYYGRYGVCKFGPACAYNHPFN).

This is Zinc finger CCCH domain-containing protein 65 from Oryza sativa subsp. japonica (Rice).